Here is a 396-residue protein sequence, read N- to C-terminus: Flavohemoprotein (396 aa).

In terms of domain architecture, Globin spans 1-136 (MLDAQTIATV…LANVFINREA (136 aa)). Residue histidine 85 coordinates heme b. Residues tyrosine 95 and glutamate 135 each act as charge relay system in the active site. The tract at residues 147-396 (GGWEGTRDFR…YECFGPHKVL (250 aa)) is reductase. The FAD-binding FR-type domain occupies 150-255 (EGTRDFRIVA…VAPAGDFFMA (106 aa)). Residues tyrosine 188 and 204-207 (RQYS) each bind FAD. 268–273 (GVGQTP) contacts NADP(+). 389-392 (CFGP) is an FAD binding site.

This sequence belongs to the globin family. Two-domain flavohemoproteins subfamily. It in the C-terminal section; belongs to the flavoprotein pyridine nucleotide cytochrome reductase family. The cofactor is heme b. Requires FAD as cofactor.

The enzyme catalyses 2 nitric oxide + NADPH + 2 O2 = 2 nitrate + NADP(+) + H(+). It carries out the reaction 2 nitric oxide + NADH + 2 O2 = 2 nitrate + NAD(+) + H(+). Is involved in NO detoxification in an aerobic process, termed nitric oxide dioxygenase (NOD) reaction that utilizes O(2) and NAD(P)H to convert NO to nitrate, which protects the bacterium from various noxious nitrogen compounds. Therefore, plays a central role in the inducible response to nitrosative stress. The protein is Flavohemoprotein of Shigella flexneri.